Here is a 208-residue protein sequence, read N- to C-terminus: Small ribosomal subunit protein uS4 (208 aa).

The S4 RNA-binding domain occupies 98 to 163; sequence RRLDNVVYRL…KPRFIEIKEK (66 aa).

This sequence belongs to the universal ribosomal protein uS4 family. Part of the 30S ribosomal subunit. Contacts protein S5. The interaction surface between S4 and S5 is involved in control of translational fidelity.

Its function is as follows. One of the primary rRNA binding proteins, it binds directly to 16S rRNA where it nucleates assembly of the body of the 30S subunit. In terms of biological role, with S5 and S12 plays an important role in translational accuracy. The protein is Small ribosomal subunit protein uS4 of Caldicellulosiruptor saccharolyticus (strain ATCC 43494 / DSM 8903 / Tp8T 6331).